The chain runs to 111 residues: uncharacterized protein (111 aa).

This sequence belongs to the SUI1 family.

This is an uncharacterized protein from Synechocystis sp. (strain ATCC 27184 / PCC 6803 / Kazusa).